The chain runs to 1224 residues: DNA-directed RNA polymerase subunit beta'' (1224 aa).

Zn(2+)-binding residues include C223, C297, C304, and C307.

The protein belongs to the RNA polymerase beta' chain family. RpoC2 subfamily. In terms of assembly, in plastids the minimal PEP RNA polymerase catalytic core is composed of four subunits: alpha, beta, beta', and beta''. When a (nuclear-encoded) sigma factor is associated with the core the holoenzyme is formed, which can initiate transcription. Requires Zn(2+) as cofactor.

It is found in the plastid. The protein localises to the chloroplast. The enzyme catalyses RNA(n) + a ribonucleoside 5'-triphosphate = RNA(n+1) + diphosphate. Its function is as follows. DNA-dependent RNA polymerase catalyzes the transcription of DNA into RNA using the four ribonucleoside triphosphates as substrates. The sequence is that of DNA-directed RNA polymerase subunit beta'' from Porphyra purpurea (Red seaweed).